An 87-amino-acid chain; its full sequence is Beta-defensin 109 (87 aa).

A signal peptide spans 1-22 (MRLHLLLLILLLFSILLSPVRG). 3 cysteine pairs are disulfide-bonded: Cys31–Cys59, Cys38–Cys53, and Cys43–Cys60.

This sequence belongs to the beta-defensin family.

The protein resides in the secreted. Its function is as follows. Has antibacterial activity. In Pan troglodytes (Chimpanzee), this protein is Beta-defensin 109 (DEFB109).